We begin with the raw amino-acid sequence, 316 residues long: NAC domain-containing protein 22 (316 aa).

Positions 17–170 constitute an NAC domain; the sequence is DLPGFRFHPT…DMVLCKIYRK (154 aa). A DNA-binding region spans residues 117–176; the sequence is IGLKKTLVFYQGRAPRGTKTDWVMNEYRLPDYGAARAAAPPPKEDMVLCKIYRKATPLKE. Residues 229-260 are disordered; the sequence is QSSSSSAAPSGSSSKNGGAGAPREAKKEEADV. Positions 230–244 are enriched in low complexity; it reads SSSSSAAPSGSSSKN.

The protein resides in the nucleus. Its function is as follows. Transcription activator that binds sequence-specific DNA motifs. Involved in stress response. Plays a positive role in drought and salt stress tolerance through the modulation of abscisic acid-mediated signaling. The sequence is that of NAC domain-containing protein 22 from Oryza sativa subsp. japonica (Rice).